Reading from the N-terminus, the 285-residue chain is Tropomyosin (285 aa).

Positions 1–273 form a coiled coil; it reads MDAIKKKMQA…KEKYREIGDD (273 aa).

Belongs to the tropomyosin family. In terms of assembly, homodimer.

In terms of biological role, tropomyosin, in association with the troponin complex, plays a central role in the calcium dependent regulation of muscle contraction. In Chironomus kiiensis (Midge), this protein is Tropomyosin.